Reading from the N-terminus, the 206-residue chain is GCN5-like protein acetyltransferase Rv2170 (206 aa).

Residues 44-205 form the N-acetyltransferase domain; it reads EHIRRRGWQA…AFAILGRTLP (162 aa). Y176 functions as the Proton donor in the catalytic mechanism.

This sequence belongs to the acetyltransferase family.

It catalyses the reaction L-lysyl-[protein] + acetyl-CoA = N(6)-acetyl-L-lysyl-[protein] + CoA + H(+). The enzyme catalyses propanoyl-CoA + L-lysyl-[protein] = N(6)-propanoyl-L-lysyl-[protein] + CoA + H(+). The catalysed reaction is succinyl-CoA + L-lysyl-[protein] = N(6)-succinyl-L-lysyl-[protein] + CoA + H(+). Its function is as follows. Acetyltransferase involved in the post-translational regulation of the central metabolic enzyme isocitrate dehydrogenase 1 (ICDH-1) through lysine acetylation. Catalyzes the acetylation of ICDH-1 at Lys-30 and Lys-129, using acetyl-CoA as a donor, leading to a reduction of ICDH-1 enzyme activity. Can also use propionyl-CoA and succinyl-CoA as donors. Cannot act on the isocitrate dehydrogenase 2 (ICDH-2). Might play a role in regulating the TCA cycle and methylcitrate cycle when M.tuberculosis utilizes fatty acid as carbon source. Functionally, in addition, it can acetylate the amino group of isoniazid (INH), one of the first-line drugs used for the treatment of tuberculosis, thereby canceling out the drug toxicity. Acts by catalyzing the transfer of an acetyl group from acetyl-CoA to INH. Following acetylation, INH is broken down into isonicotinic acid and acetylhydrazine. M.smegmatis and M.tuberculosis H37Ra strains overexpressing Rv2170 are resistant to INH. Has little or no acetyltransferase activity with other antibiotics such as streptomycin, neomycin, kanamycin, amikacin, apramycin and gentamicin. In Mycobacterium tuberculosis (strain ATCC 25618 / H37Rv), this protein is GCN5-like protein acetyltransferase Rv2170.